The sequence spans 270 residues: Aliphatic sulfonates import ATP-binding protein SsuB (270 aa).

The ABC transporter domain occupies 17-238 (LASKGLRKTF…ARGSHRLAAL (222 aa)). 49-56 (GRSGCGKS) is an ATP binding site. The segment at 248 to 270 (STPGTAPEPDPVAPLPTQLRWAH) is disordered.

Belongs to the ABC transporter superfamily. Aliphatic sulfonates importer (TC 3.A.1.17.2) family. In terms of assembly, the complex is composed of two ATP-binding proteins (SsuB), two transmembrane proteins (SsuC) and a solute-binding protein (SsuA).

Its subcellular location is the cell inner membrane. It carries out the reaction ATP + H2O + aliphatic sulfonate-[sulfonate-binding protein]Side 1 = ADP + phosphate + aliphatic sulfonateSide 2 + [sulfonate-binding protein]Side 1.. Functionally, part of the ABC transporter complex SsuABC involved in aliphatic sulfonates import. Responsible for energy coupling to the transport system. This Pseudomonas putida (strain ATCC 47054 / DSM 6125 / CFBP 8728 / NCIMB 11950 / KT2440) protein is Aliphatic sulfonates import ATP-binding protein SsuB.